Reading from the N-terminus, the 222-residue chain is Charged multivesicular body protein 4a (222 aa).

2 disordered regions span residues 1 to 21 (MSGL…TPEE) and 180 to 211 (VGDK…DEDE). The interaction with phosphoinosides stretch occupies residues 1 to 116 (MSGLGRLFGK…ELAAQSMKKA (116 aa)). Positions 1–150 (MSGLGRLFGK…QISDAISRPM (150 aa)) are intramolecular interaction with C-terminus. Coiled-coil stretches lie at residues 20–105 (EEAI…VLRT) and 155–180 (DVDE…LLNV). The interval 151–222 (GFGDDVDEDE…ALKQLAEWVS (72 aa)) is intramolecular interaction with N-terminus. The residue at position 196 (Ser196) is a Phosphoserine.

The protein belongs to the SNF7 family. Probable core component of the endosomal sorting required for transport complex III (ESCRT-III). ESCRT-III components are thought to multimerize to form a flat lattice on the perimeter membrane of the endosome. Several assembly forms of ESCRT-III may exist that interact and act sequentially. Self-associates; overexpression leads to the assembly of filaments that curve and associate to create circular rings. Interacts with CHMP2A. Interacts with CHMP3; the interaction requires the release of CHMP4A autoinhibition. Interacts with CHMP4B. Interacts with CHMP4C. Interacts with CHMP6. Interacts with VPS4A. Interacts with PDCD6IP; the interaction is direct. As to expression, widely expressed. Expressed at higher level in heart, kidney, liver and skeletal muscle. Also expressed in brain, placenta, lung and pancreas.

The protein localises to the cytoplasmic vesicle membrane. The protein resides in the late endosome membrane. In terms of biological role, probable core component of the endosomal sorting required for transport complex III (ESCRT-III) which is involved in multivesicular bodies (MVBs) formation and sorting of endosomal cargo proteins into MVBs. MVBs contain intraluminal vesicles (ILVs) that are generated by invagination and scission from the limiting membrane of the endosome and mostly are delivered to lysosomes enabling degradation of membrane proteins, such as stimulated growth factor receptors, lysosomal enzymes and lipids. The MVB pathway appears to require the sequential function of ESCRT-O, -I,-II and -III complexes. ESCRT-III proteins mostly dissociate from the invaginating membrane before the ILV is released. The ESCRT machinery also functions in topologically equivalent membrane fission events, such as the terminal stages of cytokinesis and the budding of enveloped viruses (HIV-1 and other lentiviruses). ESCRT-III proteins are believed to mediate the necessary vesicle extrusion and/or membrane fission activities, possibly in conjunction with the AAA ATPase VPS4. When overexpressed, membrane-assembled circular arrays of CHMP4A filaments can promote or stabilize negative curvature and outward budding. Via its interaction with PDCD6IP involved in HIV-1 p6- and p9-dependent virus release. CHMP4A/B/C are required for the exosomal release of SDCBP, CD63 and syndecan. This is Charged multivesicular body protein 4a (CHMP4A) from Homo sapiens (Human).